The sequence spans 115 residues: Iron-sulfur cluster insertion protein ErpA (115 aa).

Residues Cys-42, Cys-106, and Cys-108 each contribute to the iron-sulfur cluster site.

It belongs to the HesB/IscA family. Homodimer. Iron-sulfur cluster is required as a cofactor.

Its function is as follows. Required for insertion of 4Fe-4S clusters for at least IspG. This is Iron-sulfur cluster insertion protein ErpA from Baumannia cicadellinicola subsp. Homalodisca coagulata.